A 610-amino-acid chain; its full sequence is Autophagy-related protein 22-1 (610 aa).

The segment at M1–P29 is disordered. A helical membrane pass occupies residues Y41 to L61. N-linked (GlcNAc...) asparagine glycosylation is present at N90. A run of 3 helical transmembrane segments spans residues S120–F140, L153–P173, and I177–L197. The disordered stretch occupies residues K216 to N242. Over residues G229 to R239 the composition is skewed to polar residues. Helical transmembrane passes span G277 to F297, T310 to V330, V379 to T399, and V415 to V435. Residue N445 is glycosylated (N-linked (GlcNAc...) asparagine). Helical transmembrane passes span L450–V470, F485–G507, K527–V547, and G550–A570. Positions K586 to P610 are disordered. The N-linked (GlcNAc...) asparagine glycan is linked to N591.

This sequence belongs to the ATG22 family.

The protein localises to the vacuole membrane. In terms of biological role, vacuolar effluxer which mediate the efflux of amino acids resulting from autophagic degradation. The release of autophagic amino acids allows the maintenance of protein synthesis and viability during nitrogen starvation. The protein is Autophagy-related protein 22-1 (atg22-1) of Aspergillus clavatus (strain ATCC 1007 / CBS 513.65 / DSM 816 / NCTC 3887 / NRRL 1 / QM 1276 / 107).